The following is a 69-amino-acid chain: Putative membrane protein insertion efficiency factor (69 aa).

It belongs to the UPF0161 family.

It is found in the cell membrane. In terms of biological role, could be involved in insertion of integral membrane proteins into the membrane. This Caldanaerobacter subterraneus subsp. tengcongensis (strain DSM 15242 / JCM 11007 / NBRC 100824 / MB4) (Thermoanaerobacter tengcongensis) protein is Putative membrane protein insertion efficiency factor.